Reading from the N-terminus, the 610-residue chain is MCGIVGYAGKKNAESVLVVGLICLEYRGYDSAGIAVLDQGDILVRKSKGKIKDLEAYLREFPAPGNVGIGHTRWATHGEPNQINAHPHTDTNSTVAVVHNGIIENYLELKSQLKKKGHVFQSLTDTEVLPHLLEESKKNGKSNKDSFLELFGKIHGKWAISSVFETEPDRVYFAQDGAPLLIGKGKGEYFLASDISPLTRNCEEVYYVNSGEWGYFSQNEFKLFDFSGKELNPTFKKQELRWEDLDKGGYPHYMIKEIHEQAGIFRKIIQERILENSEIVFPEIKLSKDVLSRVNRIIIQAAGTSYYAGMIGKHYLENFAKIQTDTEASSEFRYRNPVVEGDTLIMGISQSGETADTLASIHEAKAKFIKVVSLVNNVNSTIARESDSYIRTDAGPEIGVASTKAFTAQVLNLLLFSIYMANLKWLISDEEQKILIEEIKLLPAKIDRILAQASKIEEMSSHFTTAKDFIFLGRTYNHPVAMEGALKLKEISYIHASGYAGGEFKHGPIALITNEVPVVCIAPKSEIYTKMVSNIQEIKARKGIIISIVTEGDQEAKSLSDYCFEIPECSEILSPILNVIPLQLLAYYSAIARGCPPDQPRNLAKSVTVE.

Cys-2 acts as the Nucleophile; for GATase activity in catalysis. The region spanning 2–219 (CGIVGYAGKK…SGEWGYFSQN (218 aa)) is the Glutamine amidotransferase type-2 domain. SIS domains are found at residues 287–431 (SKDV…SDEE) and 459–600 (MSSH…PDQP). Lys-605 serves as the catalytic For Fru-6P isomerization activity.

In terms of assembly, homodimer.

The protein resides in the cytoplasm. The catalysed reaction is D-fructose 6-phosphate + L-glutamine = D-glucosamine 6-phosphate + L-glutamate. Functionally, catalyzes the first step in hexosamine metabolism, converting fructose-6P into glucosamine-6P using glutamine as a nitrogen source. In Leptospira interrogans serogroup Icterohaemorrhagiae serovar copenhageni (strain Fiocruz L1-130), this protein is Glutamine--fructose-6-phosphate aminotransferase [isomerizing].